The sequence spans 646 residues: Autophagy-related protein 28 (646 aa).

Disordered regions lie at residues 1-148 and 221-245; these read MSSP…HVDN and PTRS…RGLK. Over residues 12 to 21 the composition is skewed to polar residues; that stretch reads SPRQRLSNPL. Low complexity predominate over residues 63–75; that stretch reads SATSTRRSSSPAS. Residues 106-122 show a composition bias toward polar residues; it reads MMMNQHPSRQSTVSSHG. Coiled coils occupy residues 283–350 and 485–514; these read LDKM…MEDV and QQAA…ESKH. Disordered stretches follow at residues 475–494 and 546–612; these read SQAG…SQLS and AAAV…RGSA. Composition is skewed to basic and acidic residues over residues 557-575 and 588-597; these read STDK…SHDE and RMEDHDHDPP.

The protein belongs to the ATG28 family.

It is found in the cytoplasm. The protein localises to the vacuole membrane. The protein resides in the cytoplasmic vesicle membrane. In terms of biological role, required for the autophagic degradation of peroxisomes called pexophagy, but not essential for general autophagy. Involved in resistance to elevated pH. In Gibberella zeae (strain ATCC MYA-4620 / CBS 123657 / FGSC 9075 / NRRL 31084 / PH-1) (Wheat head blight fungus), this protein is Autophagy-related protein 28.